A 116-amino-acid polypeptide reads, in one-letter code: L-amino-acid oxidase BjussuLAAO-II (116 aa).

An FAD-binding site is contributed by 42–45 (GPMR). Positions 45 and 78 each coordinate substrate.

It belongs to the flavin monoamine oxidase family. FIG1 subfamily. As to quaternary structure, homodimer; non-covalently linked. The cofactor is FAD. Post-translationally, glycosylated. In terms of tissue distribution, expressed by the venom gland.

The protein localises to the secreted. It catalyses the reaction an L-alpha-amino acid + O2 + H2O = a 2-oxocarboxylate + H2O2 + NH4(+). The enzyme catalyses L-leucine + O2 + H2O = 4-methyl-2-oxopentanoate + H2O2 + NH4(+). It carries out the reaction L-phenylalanine + O2 + H2O = 3-phenylpyruvate + H2O2 + NH4(+). The catalysed reaction is L-methionine + O2 + H2O = 4-methylsulfanyl-2-oxobutanoate + H2O2 + NH4(+). It catalyses the reaction L-isoleucine + O2 + H2O = (S)-3-methyl-2-oxopentanoate + H2O2 + NH4(+). The enzyme catalyses L-histidine + O2 + H2O = 3-(imidazol-5-yl)pyruvate + H2O2 + NH4(+). It carries out the reaction L-tyrosine + O2 + H2O = 3-(4-hydroxyphenyl)pyruvate + H2O2 + NH4(+). The catalysed reaction is L-tryptophan + O2 + H2O = indole-3-pyruvate + H2O2 + NH4(+). With respect to regulation, its enzymatic activities is reduced by the presence of Zn(2+), Al(3+), Cu(2+), Na(+) or Ni(2+) salts. Functionally, catalyzes an oxidative deamination of predominantly hydrophobic and aromatic L-amino acids, thus producing hydrogen peroxide that may contribute to the diverse toxic effects of this enzyme. Shows very high enzymatic activity on L-Met and L-Leu, high activity on L-Ile, L-Phe and L-Tyr and moderate activity on L-His. Exhibits diverse biological activities, such as hemorrhage, hemolysis, edema, apoptosis of vascular endothelial cells or tumor cell lines, and antibacterial, as well as regulation of platelet aggregation. Effects of snake L-amino oxidases on platelets are controversial, since they either induce aggregation or inhibit agonist-induced aggregation. These different effects are probably due to different experimental conditions. In vitro, has a strong antiprotozoal effect against Leishmania amazonensis (IC(50)=4.56 ug/mL) and Trypanosoma cruzi (IC(50)=4.85 ug/mL). It also causes cell death and DNA damage in hepatocarcinoma cells (HepG2) in vitro by inducing oxidative stress. It exerts cytotoxicity towards colorectal adenocarcinomahuman cells (Caco-2) by acting on multiple intracellular targets. It diminishes cell viability by decreasing mitochondrial activity, the activity of acid phosphatases, and lysosomal function. In addition, it increases intracellular levels of reactive oxygen species and DNA damage, it elevates the expression of the pro-inflammatory cytokine genes TNF and IL6, and lowers the expression of the apoptotic-related genes. Also induces cytotoxicity (IC(50)=1.80 ug/mL) and apoptosis in MCF-7 cells (a human breast adeno-carcinoma cell line) by activating the intrinsic and extrinsic apoptosis pathways, but are not cytotoxic towards MCF-10A cells (a non-tumorigenic human breast epithelial cell line). The chain is L-amino-acid oxidase BjussuLAAO-II from Bothrops jararacussu (Jararacussu).